We begin with the raw amino-acid sequence, 980 residues long: Ankycorbin (980 aa).

Methionine 1 is subject to N-acetylmethionine. Position 11 is a phosphoserine (serine 11). ANK repeat units follow at residues 18-51, 52-81, 85-114, 118-147, 151-180, 184-213, and 217-247; these read KNDDRLLQAVENGDAEKVASLLGKKGASATKHDS, EGKTAFHLAAAKGHVECLRVMITHGVDVTA, TGHSALHLAAKNSHHECIRKLLQSKCPAES, SGKTALHYAAAQGCLQAVQILCEHKSPINL, DGNIPLLLAVQNGHSEICHFLLDHGADVNS, SGRTALMLACEIGSSNAVEALIKKGADLNL, and LGYNALHYSKLSENAGIQSLLLSKISQDADL. The span at 247–259 shows a compositional bias: basic and acidic residues; sequence LKTPTKPKQHDQV. A disordered region spans residues 247 to 301; it reads LKTPTKPKQHDQVSKISSERSGTPKKRKAPPPPISPTQLSDVSSPRSITSTPLSG. The residue at position 249 (threonine 249) is a Phosphothreonine. A Nuclear localization signal motif is present at residues 270-276; the sequence is PKKRKAP. A phosphoserine mark is found at serine 281, serine 286, and serine 293. The segment covering 282–299 has biased composition (polar residues); that stretch reads PTQLSDVSSPRSITSTPL. A phosphothreonine mark is found at threonine 295 and threonine 297. Serine 300, serine 304, serine 318, serine 327, serine 329, serine 340, serine 341, serine 350, serine 358, serine 419, serine 512, serine 515, serine 667, and serine 915 each carry phosphoserine. A coiled-coil region spans residues 349 to 374; it reads LSLLQAKVASLTLHNKELQDKLQAKS. Positions 387-423 are disordered; the sequence is YHSTQTDLGPSLGKPGETSPPDSKSSPSVLIHSLGKS. Positions 425–947 form a coiled coil; the sequence is TDNDVRIQQL…QHQEVISVYR (523 aa).

In terms of assembly, interacts with PALLD. Associates with actin. However, does not bind F-actin directly. As to expression, highly expressed in placenta, muscle, kidney and testis. Moderately expressed in heart, brain, lung, liver and intestine. Isoform 2 is widely expressed and expressed in fetal and adult testes, and spermatozoa.

Its subcellular location is the cytoplasm. It is found in the cytoskeleton. The protein localises to the stress fiber. It localises to the cell cortex. The protein resides in the cell junction. Its subcellular location is the nucleus. Its function is as follows. Plays a role in actin regulation at the ectoplasmic specialization, a type of cell junction specific to testis. Important for establishment of sperm polarity and normal spermatid adhesion. May also promote integrity of Sertoli cell tight junctions at the blood-testis barrier. The chain is Ankycorbin (RAI14) from Homo sapiens (Human).